The primary structure comprises 279 residues: MGILYLVATPIGNLGDMTPRAVETLQTVDLIAAEDTRHTGKLLQHFQITTPQISYHDHNRHGRTQELLAKLQAGQNIALVSDAGTPGISDPGQELVAACGEANIEVIPIPGATALIAALISSGLATDRFVFEGFLSTKNRPRQQLLQSLAQEERTIILYEAPHRLLATLTDLQTFLGQERSLTVARELTKYHEQFWRGTLQTAIAYFTENTPKGEFCLVIAGATPEDRPSFSEENLRDELRSLMAKGLTRSQASRQLAEETKLPRRQLYQLSLELEADG.

The protein belongs to the methyltransferase superfamily. RsmI family.

It localises to the cytoplasm. The catalysed reaction is cytidine(1402) in 16S rRNA + S-adenosyl-L-methionine = 2'-O-methylcytidine(1402) in 16S rRNA + S-adenosyl-L-homocysteine + H(+). Functionally, catalyzes the 2'-O-methylation of the ribose of cytidine 1402 (C1402) in 16S rRNA. The polypeptide is Ribosomal RNA small subunit methyltransferase I (Synechocystis sp. (strain ATCC 27184 / PCC 6803 / Kazusa)).